The sequence spans 690 residues: MLRATAPCWFPPGYPEAKKVAEEAALEAPEFPLPSHQPAQSFGLPVPQMHNQASAFVDIQAEPQNRGPAVHPAWPKMVTEACYFPAQRGSACCLPAAPRLTERPSGVRISAPRKRKTIAQSSSPCLVTGCTDAKRTRVASSSQRSSGSKVGRQPGKTRNRSGMACKTTTTISSKRIVRRPSLPSLKKPIILRRSGCQVPTVLRRGYLQLFTEECLKFCASKQEAEEKALNEEKVAYDCSPNKNRYLNVVLNTLKRLKGLTPSSMPGLSRAALYSRLQEFLLSQDQLKENGYPFPHPERPGGAVLFTGQGKGPGDSSCRVCCRCGTEYLVSSSGRCVRDQLCYYHWGRVRSSQVAGGRVSQYTCCAAAPGSVGCQVAKQHVRDGRKDSLDGFVETFKKELSRDAYPGIYALDCEMCYTTHGLELTRVTVVDADMRVVYDTFVKPDNEIVDYNTRFSGVTEADVAKTSITLPQVQAILLSFFSAQTILIGHSLESDLLALKLIHSTVLDTAVLFPHYLGFPYKRSLRNLAADYLGQIIQDSQDGHNSSEDANACLQLVMWKVRQRAQIQPRHRSASPAALACPWPQAPSTTAISPESSPCPPRRKAKETGAVDGRRGQKAKSNPNRPLPVPRNPCRGPSGLSPSLCPSQTSVLPLIASRSTEPPLPVPRVPAAPPRACPHPSAHPRPLSLHH.

Disordered stretches follow at residues 136 to 162 (TRVA…NRSG) and 567 to 690 (QPRH…SLHH). Polar residues predominate over residues 585-595 (APSTTAISPES). Basic and acidic residues predominate over residues 605–614 (KETGAVDGRR). Residues 612–626 (GRRGQKAKSNPNRPL) form a GOR14-1 epitope region. Low complexity predominate over residues 631–646 (NPCRGPSGLSPSLCPS). Positions 661–682 (PPLPVPRVPAAPPRACPHPSAH) are enriched in pro residues.

Belongs to the REXO1/REXO3 family.

It is found in the cytoplasm. The protein resides in the nucleus. This chain is Exonuclease GOR (REXO1L1), found in Pan troglodytes (Chimpanzee).